A 504-amino-acid polypeptide reads, in one-letter code: Facilitated trehalose transporter Tret1 (504 aa).

At 1–39 (MELNNKEDSPRHTVPFVRQITEDGKAKLEIYRPTTNPIY) the chain is on the cytoplasmic side. Residues 40 to 60 (IYTQILAAIAVSMGSMVVGFA) form a helical membrane-spanning segment. At 61–87 (SAYTSPALVSMQNTTITSFKVTEQEAS) the chain is on the extracellular side. The N-linked (GlcNAc...) asparagine glycan is linked to N73. A helical transmembrane segment spans residues 88–108 (WVGGIMPLAGLAGGIAGGPFI). At 109-120 (EYLGRKNTILAT) the chain is on the cytoplasmic side. Residues 121-141 (AVPFIVAWLLIAFANSIWMVL) form a helical membrane-spanning segment. Residues 142–145 (AGRA) are Extracellular-facing. A helical membrane pass occupies residues 146-166 (LSGFCVGIASLSLPVYLGETV). Residues 167–171 (QPEVR) lie on the Cytoplasmic side of the membrane. Residues 172 to 192 (GTLGLLPTAFGNIGILICFVA) traverse the membrane as a helical segment. Over 193–199 (GKYVNWS) the chain is Extracellular. N-linked (GlcNAc...) asparagine glycosylation occurs at N197. The chain crosses the membrane as a helical span at residues 200–220 (GLAFIGSILPIPFMVLTLLIP). Over 221–283 (ETPRWFVTRG…DLMKRSNLKP (63 aa)) the chain is Cytoplasmic. Residues 284 to 304 (LLIALGLMFFQQLSGINAVIF) traverse the membrane as a helical segment. At 305–320 (YTVSIFKDAGSTIDEN) the chain is on the extracellular side. Residues 321 to 341 (LCTIIVGVVNFGATFFATVLI) form a helical membrane-spanning segment. Over 342-347 (DRLGRK) the chain is Cytoplasmic. The helical transmembrane segment at 348–368 (ILLYISEVAMVITLLTLGTFF) threads the bilayer. Residues 369–387 (YYKNSGNDVSNIGWLPLAS) are Extracellular-facing. The helical transmembrane segment at 388–408 (FVIYVIGFSSGVGPIPWLMLG) threads the bilayer. Over 409–424 (EILPGKIRGSAASVAT) the chain is Cytoplasmic. A helical membrane pass occupies residues 425-445 (GFNWTCTFIVTKTFADIVAAI). The Extracellular portion of the chain corresponds to 446 to 448 (GNH). A helical membrane pass occupies residues 449-469 (GAFWFFGVICLIGLFFVIFFV). The Cytoplasmic segment spans residues 470-504 (PETQGKSLEEIERKMMGRVRRMSSVANMKPLSFNM).

It belongs to the major facilitator superfamily. Sugar transporter (TC 2.A.1.1) family. Trehalose transporter subfamily. As to expression, highest expression in the fat body. Not expressed in other tissues including the midgut, muscle, and integuments after 24 hours of dehydration.

The protein localises to the cell membrane. High-capacity facilitative transporter for trehalose, required to induce anhydrobiosis. Anhydrobiotic larvae can survive almost complete dehydration. Does not transport maltose, sucrose or lactose. Mediates the bidirectional transfer of trehalose. Responsible for the transport of trehalose synthesized in the fat body and the incorporation of trehalose into other tissues that require a carbon source, thereby regulating trehalose levels in the hemolymph. The chain is Facilitated trehalose transporter Tret1 from Polypedilum vanderplanki (Sleeping chironomid midge).